A 410-amino-acid polypeptide reads, in one-letter code: Serine hydroxymethyltransferase (410 aa).

(6S)-5,6,7,8-tetrahydrofolate-binding positions include L116 and 120-122 (GHL). N6-(pyridoxal phosphate)lysine is present on K225.

The protein belongs to the SHMT family. Homodimer. It depends on pyridoxal 5'-phosphate as a cofactor.

Its subcellular location is the cytoplasm. It carries out the reaction (6R)-5,10-methylene-5,6,7,8-tetrahydrofolate + glycine + H2O = (6S)-5,6,7,8-tetrahydrofolate + L-serine. It participates in one-carbon metabolism; tetrahydrofolate interconversion. It functions in the pathway amino-acid biosynthesis; glycine biosynthesis; glycine from L-serine: step 1/1. Functionally, catalyzes the reversible interconversion of serine and glycine with tetrahydrofolate (THF) serving as the one-carbon carrier. This reaction serves as the major source of one-carbon groups required for the biosynthesis of purines, thymidylate, methionine, and other important biomolecules. Also exhibits THF-independent aldolase activity toward beta-hydroxyamino acids, producing glycine and aldehydes, via a retro-aldol mechanism. This chain is Serine hydroxymethyltransferase, found in Lacticaseibacillus casei (strain BL23) (Lactobacillus casei).